A 397-amino-acid chain; its full sequence is Neuroplastin (397 aa).

The signal sequence occupies residues Met1 to Ala28. 3 consecutive Ig-like domains span residues Gln29–Thr134, Pro148–Lys234, and Pro237–Ser327. At Gln29 to Pro338 the chain is on the extracellular side. Cys52 and Cys116 are disulfide-bonded. A narpin; mediates binding with FGFR1 and has antidepressant-like activity region spans residues Arg149–Ser161. Cys169 and Cys217 are oxidised to a cystine. 6 N-linked (GlcNAc...) asparagine glycosylation sites follow: Asn170, Asn196, Asn228, Asn283, Asn295, and Asn316. Cys258 and Cys315 are joined by a disulfide. Residues Leu339–Tyr359 traverse the membrane as a helical segment. Topologically, residues Glu360–Asn397 are cytoplasmic. Residues Arg364–Asn397 form a disordered region.

As to quaternary structure, interacts with ATP2B1; this interaction stabilizes ATP2B1 and increases ATPase activity; this interaction controls T cell calcium homeostasis following T cell activation. Interacts with XKR8; promoting its localization at the cell membrane. Post-translationally, N-glycosylated. In terms of tissue distribution, isoform 1 and isoform 2 are widely expressed with variable levels in brain. Isoform 1 is expressed in cerebellum and midbrain. Isoform 1 and isoform 2 are expressed in cerebral cortex, hippocampus and striatum. Isoform 2 is more abundant in the cerebral cortex than isoform 1.

The protein resides in the cell membrane. Its subcellular location is the postsynaptic density. In terms of biological role, probable homophilic and heterophilic cell adhesion molecule involved in long term potentiation at hippocampal excitatory synapses through activation of p38MAPK. May also regulate neurite outgrowth by activating the FGFR1 signaling pathway. May play a role in synaptic plasticity. Also acts as a chaperone for ATP2B1; stabilizes ATP2B1 and increases its ATPase activity. Promotes localization of XKR8 at the cell membrane. The polypeptide is Neuroplastin (Nptn) (Mus musculus (Mouse)).